Reading from the N-terminus, the 214-residue chain is ATP-dependent Clp protease proteolytic subunit (214 aa).

Serine 106 functions as the Nucleophile in the catalytic mechanism. Histidine 131 is a catalytic residue.

It belongs to the peptidase S14 family. Fourteen ClpP subunits assemble into 2 heptameric rings which stack back to back to give a disk-like structure with a central cavity, resembling the structure of eukaryotic proteasomes.

The protein localises to the cytoplasm. The enzyme catalyses Hydrolysis of proteins to small peptides in the presence of ATP and magnesium. alpha-casein is the usual test substrate. In the absence of ATP, only oligopeptides shorter than five residues are hydrolyzed (such as succinyl-Leu-Tyr-|-NHMec, and Leu-Tyr-Leu-|-Tyr-Trp, in which cleavage of the -Tyr-|-Leu- and -Tyr-|-Trp bonds also occurs).. In terms of biological role, cleaves peptides in various proteins in a process that requires ATP hydrolysis. Has a chymotrypsin-like activity. Plays a major role in the degradation of misfolded proteins. This chain is ATP-dependent Clp protease proteolytic subunit, found in Rhodopseudomonas palustris (strain BisB5).